The following is a 732-amino-acid chain: MGTTILVLSKILTFLLTTMLIGSSVIQCSSVTYDKKAIVINGHRRILLSGSIHYPRSTPEMWEDLIKKAKDGGLDVIDTYVFWNGHEPSPGTYNFEGRYDLVRFIKTIQEVGLYVHLRIGPYVCAEWNFGGFPVWLKYVDGISFRTDNGPFKSAMQGFTEKIVQMMKEHRFFASQGGPIILSQIENEFEPDLKGLGPAGHSYVNWAAKMAVGLNTGVPWVMCKEDDAPDPIINTCNGFYCDYFTPNKPYKPTMWTEAWSGWFTEFGGTVPKRPVEDLAFGVARFIQKGGSYINYYMYHGGTNFGRTAGGPFITTSYDYDAPIDEYGLVQEPKYSHLKQLHQAIKQCEAALVSSDPHVTKLGNYEEAHVFTAGKGSCVAFLTNYHMNAPAKVVFNNRHYTLPAWSISILPDCRNVVFNTATVAAKTSHVQMVPSGSILYSVARYDEDIATYGNRGTITARGLLEQVNVTRDTTDYLWYTTSVDIKASESFLRGGKWPTLTVDSAGHAVHVFVNGHFYGSAFGTRENRKFSFSSQVNLRGGANKIALLSVAVGLPNVGPHFETWATGIVGSVVLHGLDEGNKDLSWQKWTYQAGLRGESMNLVSPTEDSSVDWIKGSLAKQNKQPLTWYKAYFDAPRGNEPLALDLKSMGKGQAWINGQSIGRYWMAFAKGDCGSCNYAGTYRQNKCQSGCGEPTQRWYHVPRSWLKPKGNLLVLFEELGGDISKVSVVKRSVN.

The first 23 residues, Met1–Ser23, serve as a signal peptide directing secretion. Glu187 functions as the Proton donor in the catalytic mechanism. Residue Glu256 is the Nucleophile of the active site. Residue Asn466 is glycosylated (N-linked (GlcNAc...) asparagine).

The protein belongs to the glycosyl hydrolase 35 family. As to expression, expressed in leaves and flowers.

The protein resides in the secreted. The protein localises to the extracellular space. It localises to the apoplast. It carries out the reaction Hydrolysis of terminal non-reducing beta-D-galactose residues in beta-D-galactosides.. This is Beta-galactosidase 5 (BGAL5) from Arabidopsis thaliana (Mouse-ear cress).